A 454-amino-acid polypeptide reads, in one-letter code: L-cysteine desulfhydrase (454 aa).

A disordered region spans residues 1-25; that stretch reads MEAGERRNGDSMSHNHRAPKKPRLA. The span at 14 to 23 shows a compositional bias: basic residues; the sequence is HNHRAPKKPR. Lys257 carries the N6-(pyridoxal phosphate)lysine modification.

It belongs to the class-V pyridoxal-phosphate-dependent aminotransferase family. It depends on pyridoxal 5'-phosphate as a cofactor. In terms of tissue distribution, highly expressed in stems and cauline leaves, and at lower levels in roots, rosette leaves and flowers.

The enzyme catalyses L-cysteine + H2O = hydrogen sulfide + pyruvate + NH4(+) + H(+). Catalyzes the production of hydrogen sulfide (H2S) from cysteine. Is mainly responsible for the degradation of cysteine to generate H2S, a regulator of stomatal movement and closure. The protein is L-cysteine desulfhydrase (LCD) of Arabidopsis thaliana (Mouse-ear cress).